Consider the following 387-residue polypeptide: Muscleblind-like protein 1 (387 aa).

Thr-6 is modified (phosphothreonine). 4 consecutive C3H1-type zinc fingers follow at residues 13-41 (WLTL…HPSK), 47-73 (NGRV…HPPP), 178-206 (TDRL…HPAD), and 214-240 (DNTV…HPPA).

Belongs to the muscleblind family. Interacts with DDX1 and YBX1. Interacts with HNRNPH1; the interaction in RNA-independent. Interacts with RBPMS; the interaction allows cooperative assembly of RNA-bound stable cell-specific alternative splicing regulatory complexes.

The protein resides in the nucleus. It localises to the cytoplasm. The protein localises to the cytoplasmic granule. In terms of biological role, mediates pre-mRNA alternative splicing regulation. Acts either as activator or repressor of splicing on specific pre-mRNA targets. Inhibits cardiac troponin-T (TNNT2) pre-mRNA exon inclusion but induces insulin receptor (IR) pre-mRNA exon inclusion in muscle. Antagonizes the alternative splicing activity pattern of CELF proteins. Regulates the TNNT2 exon 5 skipping through competition with U2AF2. Inhibits the formation of the spliceosome A complex on intron 4 of TNNT2 pre-mRNA. Binds to the stem-loop structure within the polypyrimidine tract of TNNT2 intron 4 during spliceosome assembly. Binds to the 5'-YGCU(U/G)Y-3'consensus sequence. Binds to the IR RNA. Binds to expanded CUG repeat RNA, which folds into a hairpin structure containing GC base pairs and bulged, unpaired U residues. Together with RNA binding proteins RBPMS and RBFOX2, activates vascular smooth muscle cells alternative splicing events. Regulates NCOR2 alternative splicing. This is Muscleblind-like protein 1 from Rattus norvegicus (Rat).